The primary structure comprises 529 residues: Bifunctional purine biosynthesis protein PurH (529 aa).

One can recognise an MGS-like domain in the interval 1–148 (MQQRRPVRRA…KNHKDVAIVV (148 aa)). K287 is subject to N6-acetyllysine.

This sequence belongs to the PurH family.

It catalyses the reaction (6R)-10-formyltetrahydrofolate + 5-amino-1-(5-phospho-beta-D-ribosyl)imidazole-4-carboxamide = 5-formamido-1-(5-phospho-D-ribosyl)imidazole-4-carboxamide + (6S)-5,6,7,8-tetrahydrofolate. The enzyme catalyses IMP + H2O = 5-formamido-1-(5-phospho-D-ribosyl)imidazole-4-carboxamide. It participates in purine metabolism; IMP biosynthesis via de novo pathway; 5-formamido-1-(5-phospho-D-ribosyl)imidazole-4-carboxamide from 5-amino-1-(5-phospho-D-ribosyl)imidazole-4-carboxamide (10-formyl THF route): step 1/1. Its pathway is purine metabolism; IMP biosynthesis via de novo pathway; IMP from 5-formamido-1-(5-phospho-D-ribosyl)imidazole-4-carboxamide: step 1/1. This Escherichia coli O6:H1 (strain CFT073 / ATCC 700928 / UPEC) protein is Bifunctional purine biosynthesis protein PurH.